The chain runs to 243 residues: 4-phosphopantoate--beta-alanine ligase (243 aa).

ATP contacts are provided by residues Arg-15, Arg-37, 176–178 (DLN), and 182–183 (RT).

The protein belongs to the archaeal phosphopantothenate synthetase family. As to quaternary structure, homodimer.

The enzyme catalyses (R)-4-phosphopantoate + beta-alanine + ATP = (R)-4'-phosphopantothenate + AMP + diphosphate + H(+). The protein operates within cofactor biosynthesis; coenzyme A biosynthesis. Its function is as follows. Catalyzes the condensation of (R)-4-phosphopantoate and beta-alanine to 4'-phosphopantothenate in the CoA biosynthesis pathway. The protein is 4-phosphopantoate--beta-alanine ligase of Methanospirillum hungatei JF-1 (strain ATCC 27890 / DSM 864 / NBRC 100397 / JF-1).